The chain runs to 307 residues: MTVITDITELIGNTPLLRLKNFDVPEGVAVYAKLEMMNPGGSIKDRLGDMLIRDALDSGKVKPGGVIIEATAGNTGIGLALSARKYGLKAIFCVPEHFSREKQQIMQALGASIIHTPRQDGMQGAIQKAIQLETEIENSYCVLQFKNRVNPSTYYKTLGPEMWEALDGNIHTFVAGAGSGGTFAGTASFLKEKNPAVKTVIVEPVGSILNGGEPHAHKTEGIGMEFIPDYMDKSHFDEIYTVTDENAFRLVKEAAEKEGLLIGSSSGAALYAALEEAKKASAGTNIVTVFPDSSDRYISKQIYEGGI.

The residue at position 44 (lysine 44) is an N6-(pyridoxal phosphate)lysine. Residues asparagine 74, 178-182 (GSGGT), and serine 265 contribute to the pyridoxal 5'-phosphate site.

This sequence belongs to the cysteine synthase/cystathionine beta-synthase family. Pyridoxal 5'-phosphate serves as cofactor.

It carries out the reaction O-acetyl-L-serine + L-homocysteine = L,L-cystathionine + acetate + H(+). Its function is as follows. Catalyzes the conversion of O-acetylserine and homocysteine to cystathionine. This Bacillus subtilis (strain 168) protein is O-acetylserine dependent cystathionine beta-synthase (mccA).